Reading from the N-terminus, the 578-residue chain is A-type ATP synthase subunit A (578 aa).

Residue 228–235 participates in ATP binding; the sequence is GPFGSGKT.

Belongs to the ATPase alpha/beta chains family. As to quaternary structure, has multiple subunits with at least A(3), B(3), C, D, E, F, H, I and proteolipid K(x).

It localises to the cell membrane. The enzyme catalyses ATP + H2O + 4 H(+)(in) = ADP + phosphate + 5 H(+)(out). Functionally, component of the A-type ATP synthase that produces ATP from ADP in the presence of a proton gradient across the membrane. The A chain is the catalytic subunit. The sequence is that of A-type ATP synthase subunit A from Methanosarcina acetivorans (strain ATCC 35395 / DSM 2834 / JCM 12185 / C2A).